The following is a 494-amino-acid chain: UPF0371 protein SP_0341 (494 aa).

The protein belongs to the UPF0371 family.

The protein is UPF0371 protein SP_0341 of Streptococcus pneumoniae serotype 4 (strain ATCC BAA-334 / TIGR4).